Reading from the N-terminus, the 60-residue chain is Putative mercuric resistance protein (60 aa).

In Pseudomonas aeruginosa, this protein is Putative mercuric resistance protein.